A 30-amino-acid polypeptide reads, in one-letter code: GIPCGESCVYIPCLTSAIGCSCKSKVCYRN.

Residues 1 to 30 constitute a cross-link (cyclopeptide (Gly-Asn)); that stretch reads GIPCGESCVYIPCLTSAIGCSCKSKVCYRN. Disulfide bonds link cysteine 4–cysteine 20, cysteine 8–cysteine 22, and cysteine 13–cysteine 27.

Belongs to the cyclotide family. Bracelet subfamily. In terms of processing, this is a cyclic peptide.

In terms of biological role, probably participates in a plant defense mechanism. This chain is Cycloviolacin-H1, found in Viola hederacea (Australian violet).